A 108-amino-acid chain; its full sequence is Glutaredoxin-1 (108 aa).

Positions 3–106 (EEFVQQRLAN…DILSSIGVLR (104 aa)) constitute a Glutaredoxin domain. Cysteine 23 and cysteine 26 are disulfide-bonded.

The protein belongs to the glutaredoxin family.

It localises to the virion. In terms of biological role, displays thioltransferase and dehydroascorbate reductase activities. The protein is Glutaredoxin-1 (OPG075) of Vaccinia virus (strain Copenhagen) (VACV).